A 394-amino-acid chain; its full sequence is Galactose-3-O-sulfotransferase 2 (394 aa).

Residues 1 to 8 (MWGSQHRS) are Cytoplasmic-facing. The chain crosses the membrane as a helical; Signal-anchor for type II membrane protein span at residues 9–29 (FQVALWFLVLAVFLLVGFLHV). Topologically, residues 30 to 394 (DFRLLIPDKV…TPKDIPFLKK (365 aa)) are lumenal. Asn-72, Asn-176, Asn-284, and Asn-326 each carry an N-linked (GlcNAc...) asparagine glycan.

It belongs to the galactose-3-O-sulfotransferase family.

It is found in the golgi apparatus. It localises to the golgi stack membrane. It participates in protein modification; carbohydrate sulfation. With respect to regulation, strongly inhibited by Cu(2+) and Zn(2+). Transfers a sulfate group to the hydroxyl group at C3 of non-reducing beta-galactosyl residues. Acts both on type 1 (Gal-beta-1,3-GlcNAc) and type 2 (Gal-beta-1,4-GlcNAc) chains with similar efficiency. The protein is Galactose-3-O-sulfotransferase 2 (Gal3st2) of Mus musculus (Mouse).